The sequence spans 477 residues: UDP-N-acetylmuramate--L-alanine ligase (477 aa).

112–118 (GAHGKTT) contacts ATP.

It belongs to the MurCDEF family.

The protein localises to the cytoplasm. It carries out the reaction UDP-N-acetyl-alpha-D-muramate + L-alanine + ATP = UDP-N-acetyl-alpha-D-muramoyl-L-alanine + ADP + phosphate + H(+). Its pathway is cell wall biogenesis; peptidoglycan biosynthesis. Cell wall formation. The sequence is that of UDP-N-acetylmuramate--L-alanine ligase from Delftia acidovorans (strain DSM 14801 / SPH-1).